We begin with the raw amino-acid sequence, 275 residues long: 6-deoxy-6-sulfo-D-fructose transketolase subunit SqwG (275 aa).

It belongs to the transketolase family. In terms of assembly, forms a complex with SqwH. Thiamine diphosphate serves as cofactor.

The catalysed reaction is 6-deoxy-6-sulfo-D-fructose + D-glyceraldehyde 3-phosphate = 4-deoxy-4-sulfo-D-erythrose + D-xylulose 5-phosphate. It catalyses the reaction 4-deoxy-4-sulfo-D-erythrulose + D-glyceraldehyde 3-phosphate = sulfoacetaldehyde + D-xylulose 5-phosphate. Part of the sulfo-TK pathway, a D-sulfoquinovose degradation pathway that produces 2-hydroxyethane-1-sulfonate (isethionate). Catalyzes two steps of the pathway: the formation of 4-deoxy-4-sulfoerythrose (SE) and xylulose 5-phosphate from 6-deoxy-6-sulfo-D-fructose (SF) and glyceraldehyde 3-phosphate, and the formation of sulfoacetaldehyde (SA) and xylulose 5-phosphate from 4-deoxy-4-sulfo-D-erythrulose (SEu) and glyceraldehyde 3-phosphate. This Clostridium sp. (strain MSTE9) protein is 6-deoxy-6-sulfo-D-fructose transketolase subunit SqwG.